The primary structure comprises 195 residues: HTH-type transcriptional regulator BetI (195 aa).

An HTH tetR-type domain is found at 8–68; that stretch reads PIRRQQLIEA…ATMRYLISHL (61 aa). Residues 31 to 50 constitute a DNA-binding region (H-T-H motif); that stretch reads SIVQIARRAGVSNGIISHYF.

It functions in the pathway amine and polyamine biosynthesis; betaine biosynthesis via choline pathway [regulation]. Its function is as follows. Repressor involved in the biosynthesis of the osmoprotectant glycine betaine. It represses transcription of the choline transporter BetT and the genes of BetAB involved in the synthesis of glycine betaine. This Pectobacterium atrosepticum (strain SCRI 1043 / ATCC BAA-672) (Erwinia carotovora subsp. atroseptica) protein is HTH-type transcriptional regulator BetI.